We begin with the raw amino-acid sequence, 93 residues long: Leukocyte-specific transcript 1 protein (93 aa).

The chain crosses the membrane as a helical span at residues 14–32; sequence AGSCCWLWSFCPPACIGCI. Residue Ser-54 is modified to Phosphoserine. Positions 57–82 are disordered; it reads RLPVSSSEGPDLRDRDKRGTKEDPRA. Over residues 66 to 82 the composition is skewed to basic and acidic residues; that stretch reads PDLRDRDKRGTKEDPRA.

It belongs to the LST1 family.

It localises to the membrane. Its subcellular location is the golgi apparatus membrane. The protein resides in the endomembrane system. In terms of biological role, possible role in modulating immune responses. Has an inhibitory effect on lymphocyte proliferation. Induces morphological changes including production of filopodia and microspikes when overexpressed in a variety of cell types and may be involved in dendritic cell maturation. This chain is Leukocyte-specific transcript 1 protein (LST1), found in Macaca mulatta (Rhesus macaque).